A 114-amino-acid polypeptide reads, in one-letter code: rRNA-processing protein cgrA (114 aa).

The interval 1 to 96 (MSASESAPSA…YDKMAEKMHR (96 aa)) is disordered. A coiled-coil region spans residues 40-101 (AKRLEARKHQ…EKMHRKRVER (62 aa)). Over residues 41–93 (KRLEARKHQEAVKEHERELKEEKEAERQAHIQRIKDRRAAKEEKERYDKMAEK) the composition is skewed to basic and acidic residues.

The protein belongs to the CGR1 family.

The protein resides in the nucleus. The protein localises to the nucleolus. Functionally, involved in nucleolar integrity and required for processing of the pre-rRNA for the 60S ribosome subunit. The chain is rRNA-processing protein cgrA (cgrA) from Aspergillus terreus (strain NIH 2624 / FGSC A1156).